The sequence spans 464 residues: Sensor histidine kinase Hik34 (464 aa).

In terms of domain architecture, Histidine kinase spans 235–449 (ALTHEVRTPL…ILTIYLKCEQ (215 aa)). Phosphohistidine; by autocatalysis is present on His238.

When expressed in E.coli autophosphorylates at 18 to 30 degrees Celsius; less phosphorylation occurs at 36 and none occurs at 42 or 48 degrees Celsius.

The enzyme catalyses ATP + protein L-histidine = ADP + protein N-phospho-L-histidine.. Member of a two-component system Hik34/Rre1, controlling expression of at least 20 genes in response to hyperosmotic stress (0.5 M sorbitol) or salt (0.5 M NaCl). Represses expression of heat shock genes under normal growth conditions. Required for survival of long-term heat shock exposure. The sequence is that of Sensor histidine kinase Hik34 from Synechocystis sp. (strain ATCC 27184 / PCC 6803 / Kazusa).